A 100-amino-acid chain; its full sequence is DNA-binding protein HU (100 aa).

It belongs to the bacterial histone-like protein family.

Histone-like DNA-binding protein which is capable of wrapping DNA to stabilize it, and thus to prevent its denaturation under extreme environmental conditions. The polypeptide is DNA-binding protein HU (hup) (Synechocystis sp. (strain ATCC 27184 / PCC 6803 / Kazusa)).